The sequence spans 87 residues: Large ribosomal subunit protein bL31B (87 aa).

Belongs to the bacterial ribosomal protein bL31 family. Type B subfamily. In terms of assembly, part of the 50S ribosomal subunit.

This Staphylococcus carnosus (strain TM300) protein is Large ribosomal subunit protein bL31B.